We begin with the raw amino-acid sequence, 20 residues long: Pregnancy-associated glycoprotein 55h (20 aa).

An N-linked (GlcNAc...) asparagine glycan is attached at asparagine 4.

Belongs to the peptidase A1 family. Highly expressed in the placenta between day 60 and day 100 of gestation.

The protein resides in the secreted. Its subcellular location is the extracellular space. The protein is Pregnancy-associated glycoprotein 55h of Ovis aries (Sheep).